We begin with the raw amino-acid sequence, 195 residues long: Capsid protein (195 aa).

Residues N148–C195 are disordered. A compositionally biased stretch (basic residues) spans V161–S188. A phosphoserine; by host mark is found at S167, S174, and S182. A 1; half-length repeat occupies S167 to T172. The interval S167–S188 is 3 X 7 AA repeats of S-P-R-R-R-[PR]-S. The Bipartite nuclear localization signal motif lies at R170–R187. A run of 2 repeats spans residues S174–S180 and S182–S188. An RNA binding region spans residues Q189–C195.

The protein belongs to the orthohepadnavirus core antigen family. As to quaternary structure, homodimerizes, then multimerizes. Interacts with cytosol exposed regions of viral L glycoprotein present in the reticulum-to-Golgi compartment. Interacts with human FLNB. Phosphorylated form interacts with host importin alpha; this interaction depends on the exposure of the NLS, which itself depends upon genome maturation and/or phosphorylation of the capsid protein. Interacts with host NUP153. Phosphorylated by host SRPK1, SRPK2, and maybe protein kinase C or GAPDH. Phosphorylation is critical for pregenomic RNA packaging. Protein kinase C phosphorylation is stimulated by HBx protein and may play a role in transport of the viral genome to the nucleus at the late step during the viral replication cycle.

It is found in the virion. It localises to the host cytoplasm. Functionally, self assembles to form an icosahedral capsid. Most capsids appear to be large particles with an icosahedral symmetry of T=4 and consist of 240 copies of capsid protein, though a fraction forms smaller T=3 particles consisting of 180 capsid proteins. Entering capsids are transported along microtubules to the nucleus. Phosphorylation of the capsid is thought to induce exposure of nuclear localization signal in the C-terminal portion of the capsid protein that allows binding to the nuclear pore complex via the importin (karyopherin-) alpha and beta. Capsids are imported in intact form through the nuclear pore into the nuclear basket, where it probably binds NUP153. Only capsids that contain the mature viral genome can release the viral DNA and capsid protein into the nucleoplasm. Immature capsids get stuck in the basket. Capsids encapsulate the pre-genomic RNA and the P protein. Pre-genomic RNA is reverse-transcribed into DNA while the capsid is still in the cytoplasm. The capsid can then either be directed to the nucleus, providing more genomes for transcription, or bud through the endoplasmic reticulum to provide new virions. This Homo sapiens (Human) protein is Capsid protein.